We begin with the raw amino-acid sequence, 243 residues long: Adenosylcobinamide-GDP ribazoletransferase (243 aa).

The next 5 helical transmembrane spans lie at 31-51 (LLWY…AHLL), 61-81 (AAII…DGLA), 109-129 (IAVV…LSLL), 134-154 (GIYL…LLAT), and 188-208 (LLLG…FVWL).

This sequence belongs to the CobS family. Mg(2+) is required as a cofactor.

It is found in the cell inner membrane. It catalyses the reaction alpha-ribazole + adenosylcob(III)inamide-GDP = adenosylcob(III)alamin + GMP + H(+). The enzyme catalyses alpha-ribazole 5'-phosphate + adenosylcob(III)inamide-GDP = adenosylcob(III)alamin 5'-phosphate + GMP + H(+). It functions in the pathway cofactor biosynthesis; adenosylcobalamin biosynthesis; adenosylcobalamin from cob(II)yrinate a,c-diamide: step 7/7. Its function is as follows. Joins adenosylcobinamide-GDP and alpha-ribazole to generate adenosylcobalamin (Ado-cobalamin). Also synthesizes adenosylcobalamin 5'-phosphate from adenosylcobinamide-GDP and alpha-ribazole 5'-phosphate. This chain is Adenosylcobinamide-GDP ribazoletransferase, found in Ectopseudomonas mendocina (strain ymp) (Pseudomonas mendocina).